A 301-amino-acid chain; its full sequence is Homoserine O-acetyltransferase (301 aa).

The Acyl-thioester intermediate role is filled by Cys142. Lys163 and Ser192 together coordinate substrate. His235 serves as the catalytic Proton acceptor. The active site involves Glu237. Arg249 is a binding site for substrate.

It belongs to the MetA family.

The protein localises to the cytoplasm. The enzyme catalyses L-homoserine + acetyl-CoA = O-acetyl-L-homoserine + CoA. It participates in amino-acid biosynthesis; L-methionine biosynthesis via de novo pathway; O-acetyl-L-homoserine from L-homoserine: step 1/1. Functionally, transfers an acetyl group from acetyl-CoA to L-homoserine, forming acetyl-L-homoserine. In Succinatimonas hippei (strain DSM 22608 / JCM 16073 / KCTC 15190 / YIT 12066), this protein is Homoserine O-acetyltransferase.